We begin with the raw amino-acid sequence, 800 residues long: DNA topoisomerase 4 subunit A (800 aa).

One can recognise a Topo IIA-type catalytic domain in the interval 31 to 495 (LPDVRDGLKP…EIEEIKIDKE (465 aa)). Tyrosine 119 functions as the O-(5'-phospho-DNA)-tyrosine intermediate in the catalytic mechanism.

The protein belongs to the type II topoisomerase GyrA/ParC subunit family. ParC type 2 subfamily. Heterotetramer composed of ParC and ParE.

The protein resides in the cell membrane. It catalyses the reaction ATP-dependent breakage, passage and rejoining of double-stranded DNA.. Its function is as follows. Topoisomerase IV is essential for chromosome segregation. It relaxes supercoiled DNA. Performs the decatenation events required during the replication of a circular DNA molecule. This chain is DNA topoisomerase 4 subunit A, found in Staphylococcus aureus (strain NCTC 8325 / PS 47).